The sequence spans 364 residues: MKTNLLNYDLQGLTRHFADMGEKPFRAKQVMRWMHQSGAQNFDEMTDLAKSLRHKLNEQASIEIPKLMMSQESSDGTRKWLLDVGTGNGVETVFIPESDRGTLCISSQVGCALECTFCSTGRQGFNRNLTAAEIIGQLWWANKAMGVTPKNERVISNVVMMGMGEPMANFDNVVTALSIMLDDHGYGLSRRRVTVSTSGMVPQMDRLRDVMPVALAVSLHASNDEVRNQIVPLNKKYPLKELMAACQRYLVKAPRDFITFEYVMLDGVNDKAQHAYELIELVKDVPCKFNLIPFNPFPNSGYERSSNENIRIFRDILQQAEFVVTVRKTRGDDIDAACGQLAGQVQDKTRRQQKWQQILIGQQG.

Glu91 functions as the Proton acceptor in the catalytic mechanism. The Radical SAM core domain maps to 97 to 333 (ESDRGTLCIS…VTVRKTRGDD (237 aa)). An intrachain disulfide couples Cys104 to Cys338. [4Fe-4S] cluster contacts are provided by Cys111, Cys115, and Cys118. Residues 164–165 (GE), Ser196, 218–220 (SLH), and Asn295 each bind S-adenosyl-L-methionine. The S-methylcysteine intermediate role is filled by Cys338.

Belongs to the radical SAM superfamily. RlmN family. The cofactor is [4Fe-4S] cluster.

It is found in the cytoplasm. It catalyses the reaction adenosine(2503) in 23S rRNA + 2 reduced [2Fe-2S]-[ferredoxin] + 2 S-adenosyl-L-methionine = 2-methyladenosine(2503) in 23S rRNA + 5'-deoxyadenosine + L-methionine + 2 oxidized [2Fe-2S]-[ferredoxin] + S-adenosyl-L-homocysteine. The catalysed reaction is adenosine(37) in tRNA + 2 reduced [2Fe-2S]-[ferredoxin] + 2 S-adenosyl-L-methionine = 2-methyladenosine(37) in tRNA + 5'-deoxyadenosine + L-methionine + 2 oxidized [2Fe-2S]-[ferredoxin] + S-adenosyl-L-homocysteine. Functionally, specifically methylates position 2 of adenine 2503 in 23S rRNA and position 2 of adenine 37 in tRNAs. m2A2503 modification seems to play a crucial role in the proofreading step occurring at the peptidyl transferase center and thus would serve to optimize ribosomal fidelity. The polypeptide is Dual-specificity RNA methyltransferase RlmN (Neisseria gonorrhoeae (strain ATCC 700825 / FA 1090)).